A 100-amino-acid chain; its full sequence is Small ribosomal subunit protein uS14c (100 aa).

Belongs to the universal ribosomal protein uS14 family. Part of the 30S ribosomal subunit.

The protein resides in the plastid. The protein localises to the chloroplast. In terms of biological role, binds 16S rRNA, required for the assembly of 30S particles. This Guillardia theta (Cryptophyte) protein is Small ribosomal subunit protein uS14c.